The chain runs to 855 residues: MVVMARVPRPERPDLVFEEEDLPYEEEIMRNQFSVKCWLRYIEFKQGAPKPRLNQLYERALKLLPCSYKLWYRYLKARRAQVKHRCVTDPAYEDVNNCHERAFVFMHKMPRLWLDYCQFLMDQGRVTHTRRTFDRALRALPITQHSRIWPLYLRFLRSHPLPETAVRGYRRFLKLSPESAEEYIEYLKSSDRLDEAAQRLATVVNDERFVSKAGKSNYQLWHELCDLISQNPDKVQSLNVDAIIRGGLTRFTDQLGKLWCSLADYYIRSGHFEKARDVYEEAIRTVMTVRDFTQVFDSYAQFEESMIAAKMETASELGREEEDDVDLELRLARFEQLISRRPLLLNSVLLRQNPHHVHEWHKRVALHQGRPREIINTYTEAVQTVDPFKATGKPHTLWVAFAKFYEDNGQLDDARVILEKATKVNFKQVDDLASVWCQCGELELRHENYDEALKLLRKATALPARRAEYFDGSEPVQNRVYKSLKVWSMLADLEESLGTFQSTKAVYDRILDLRIATPQIVINYAMFLEEHKYFEESFKAYERGISLFKWPNVSDIWSTYLTKFISRYGGRKLERARDLFEQALDGCPPKYAKTLYLLYAQLEEEWGLARHAMAVYDRATRAVEPAQQYDMFNIYIKRAAEIYGVTHTRGIYQKAIEVLSDEHAREMCLRFADMECKLGEIDRARAIYSFCSQICDPRTTGAFWQTWKDFEVRHGNEDTIREMLRIRRSVQATYNTQVNFMASQMLKVSGSATGTVSDLAPGQSGMDDMKLLEQRAEQLAAEAERDQPPRAQSKIFFVRSDASREELAELAQQANPEEIQLGEDEDEDEMDLEPNEVRLEQQSVPAAVFGSLKED.

HAT repeat units follow at residues 15–47, 48–80, 90–122, 124–158, 160–192, 198–230, 235–268, 270–305, and 369–407; these read LVFE…FKQG, APKP…ARRA, PAYE…FLMD, GRVT…FLRS, PLPE…SSDR, QRLA…LISQ, VQSL…YYIR, GHFE…FEES, and GRPR…FYED. At lysine 420 the chain carries N6-acetyllysine. HAT repeat units lie at residues 498–530, 532–566, 571–605, 643–677, and 679–713; these read GTFQ…FLEE, KYFE…KFIS, RKLE…LEEE, YGVT…MECK, and GEID…FEVR. Residues 808-855 are disordered; the sequence is AELAQQANPEEIQLGEDEDEDEMDLEPNEVRLEQQSVPAAVFGSLKED. Over residues 820–834 the composition is skewed to acidic residues; the sequence is QLGEDEDEDEMDLEP. Phosphoserine is present on serine 851.

Belongs to the crooked-neck family. Associates with RNA polymerase II, the TCR-specific proteins CKN1/CSA and ERCC6/CSB, and XPA. Identified in the spliceosome C complex. Component of the XAB2 complex, a multimeric protein complex composed of XAB2, PRPF19, AQR, ZNF830, ISY1, and PPIE. Identified in a pentameric intron-binding (IB) complex composed of AQR, XAB2, ISY1, ZNF830 and PPIE that is incorporated into the spliceosome as a preassembled complex. The IB complex does not contain PRPF19.

The protein localises to the nucleus. In terms of biological role, involved in pre-mRNA splicing as component of the spliceosome. Involved in transcription-coupled repair (TCR), transcription and pre-mRNA splicing. This Rattus norvegicus (Rat) protein is Pre-mRNA-splicing factor SYF1 (Xab2).